Reading from the N-terminus, the 558-residue chain is Dimethylaniline monooxygenase [N-oxide-forming] 4 (558 aa).

FAD contacts are provided by residues Gly9 to Ser13, Glu32, and Leu40 to Trp41. Residues Thr60–Asn61 and Thr195–Asp198 each bind NADP(+). The helical transmembrane segment at Ala517–Leu537 threads the bilayer.

This sequence belongs to the FMO family. Requires FAD as cofactor. In terms of tissue distribution, liver.

It localises to the microsome membrane. The protein localises to the endoplasmic reticulum membrane. The catalysed reaction is N,N-dimethylaniline + NADPH + O2 + H(+) = N,N-dimethylaniline N-oxide + NADP(+) + H2O. Its function is as follows. This protein is involved in the oxidative metabolism of a variety of xenobiotics such as drugs and pesticides. The polypeptide is Dimethylaniline monooxygenase [N-oxide-forming] 4 (FMO4) (Homo sapiens (Human)).